We begin with the raw amino-acid sequence, 185 residues long: Adenylyl-sulfate kinase (185 aa).

ATP is bound at residue 13-20 (GLSGAGKS). Ser-86 (phosphoserine intermediate) is an active-site residue.

Belongs to the APS kinase family.

It carries out the reaction adenosine 5'-phosphosulfate + ATP = 3'-phosphoadenylyl sulfate + ADP + H(+). Its pathway is sulfur metabolism; hydrogen sulfide biosynthesis; sulfite from sulfate: step 2/3. Its function is as follows. Catalyzes the synthesis of activated sulfate. The sequence is that of Adenylyl-sulfate kinase from Myxococcus xanthus (strain DK1622).